The sequence spans 332 residues: Ribose-phosphate pyrophosphokinase (332 aa).

57-59 (DGE) contributes to the ATP binding site. Residues H150 and D189 each coordinate Mg(2+). Residue K213 is part of the active site. D-ribose 5-phosphate-binding positions include R215, D239, and 243–247 (DTAGT).

The protein belongs to the ribose-phosphate pyrophosphokinase family. Class I subfamily. Homohexamer. The cofactor is Mg(2+).

The protein localises to the cytoplasm. The enzyme catalyses D-ribose 5-phosphate + ATP = 5-phospho-alpha-D-ribose 1-diphosphate + AMP + H(+). The protein operates within metabolic intermediate biosynthesis; 5-phospho-alpha-D-ribose 1-diphosphate biosynthesis; 5-phospho-alpha-D-ribose 1-diphosphate from D-ribose 5-phosphate (route I): step 1/1. Involved in the biosynthesis of the central metabolite phospho-alpha-D-ribosyl-1-pyrophosphate (PRPP) via the transfer of pyrophosphoryl group from ATP to 1-hydroxyl of ribose-5-phosphate (Rib-5-P). This chain is Ribose-phosphate pyrophosphokinase, found in Gloeobacter violaceus (strain ATCC 29082 / PCC 7421).